The sequence spans 169 residues: Large ribosomal subunit protein bL9 (169 aa).

It belongs to the bacterial ribosomal protein bL9 family.

Its function is as follows. Binds to the 23S rRNA. In Chlamydia pneumoniae (Chlamydophila pneumoniae), this protein is Large ribosomal subunit protein bL9.